A 329-amino-acid polypeptide reads, in one-letter code: Serine/threonine-protein phosphatase PP1-alpha (329 aa).

Asp64, His66, Asp92, and Asn124 together coordinate Mn(2+). Residue His125 is the Proton donor of the active site. The Mn(2+) site is built by His173 and His248. Residues 309–329 form a disordered region; the sequence is GMNSGRPAVGGGRPGTTAGKK.

This sequence belongs to the PPP phosphatase family. PP-1 subfamily. Interacts with lab-1; the interaction is direct. Interacts with knl-1; the interaction is direct. It depends on Mn(2+) as a cofactor.

The catalysed reaction is O-phospho-L-seryl-[protein] + H2O = L-seryl-[protein] + phosphate. It catalyses the reaction O-phospho-L-threonyl-[protein] + H2O = L-threonyl-[protein] + phosphate. Its function is as follows. Serine/threonine-protein phosphatase which antagonizes the function of air-2 in the regulation of chromosome cohesion. Dephosphorylates histone H3 at 'Ser-10'. Dephosphorylates translation initiation factor eIF2alpha. Involved in the activation of chloride channel clh-3 during cell swelling and meiotic maturation. The chain is Serine/threonine-protein phosphatase PP1-alpha (gsp-1) from Caenorhabditis briggsae.